Here is a 104-residue protein sequence, read N- to C-terminus: MSYAVIVTGGKQYKVAEGEFLKIEKLEIATGESVTFDRVLLVANGEEVTIGAPVVAGAKVVAEVVSQGRHDKVRIIKFRRRKHHMKRMGHRQWFTEIKITGIQA.

Belongs to the bacterial ribosomal protein bL21 family. Part of the 50S ribosomal subunit. Contacts protein L20.

Its function is as follows. This protein binds to 23S rRNA in the presence of protein L20. This Pseudomonas putida (strain W619) protein is Large ribosomal subunit protein bL21.